The primary structure comprises 516 residues: Flavonoid-6-hydroxylase (516 aa).

The chain crosses the membrane as a helical span at residues 3–23 (FNAAVCAALAFISLLSYYLIW). Cysteine 455 contributes to the heme binding site.

The protein belongs to the cytochrome P450 family. The cofactor is heme.

The protein localises to the membrane. It catalyses the reaction genkwanin + reduced [NADPH--hemoprotein reductase] + O2 = scutellarein 7-methyl ether + oxidized [NADPH--hemoprotein reductase] + H2O. The catalysed reaction is (2S)-sakuranetin + reduced [NADPH--hemoprotein reductase] + O2 = (2S)-7-methylcarthamidin + oxidized [NADPH--hemoprotein reductase] + H2O + H(+). It carries out the reaction apigenin 4',7-dimethyl ether + reduced [NADPH--hemoprotein reductase] + O2 = ladanein + oxidized [NADPH--hemoprotein reductase] + H2O + H(+). The enzyme catalyses (2S)-naringenin 4',7-dimethyl ether + reduced [NADPH--hemoprotein reductase] + O2 = (2S)-carthamidin-4',7-dimethyl ether + oxidized [NADPH--hemoprotein reductase] + H2O + H(+). The protein operates within flavonoid metabolism. In terms of biological role, 6-OH hydroxylase involved in the biosynthesis of polymethoxylated flavonoids natural products such as pebrellin, aroma compounds which contribute to the flavor of peppermint, and exhibit pharmacological activities such as anti-allergic, anti-oxidant, antibacterial, anti-proliferative, and anti-inflammatory effects. Catalyzes the 6-hydroxylation of 7-O-methylated precursors such as the conversion of genkwanin (GENK) to scutellarein-7-methyl ether (SCU7Me). Can also use apigenin-7,4'-dimethyl ether (AdM), naringenin-7-methyl ether (SAK) and naringenin-7,4'-dimethyl ether (NdM) as substrates. The sequence is that of Flavonoid-6-hydroxylase from Mentha piperita (Peppermint).